A 134-amino-acid chain; its full sequence is uncharacterized protein (134 aa).

The next 3 helical transmembrane spans lie at 9–29 (PYFL…HGTA), 49–69 (MLLV…LGLF), and 107–127 (ALLY…ACAL).

This sequence belongs to the DoxX family.

Its subcellular location is the cell membrane. This is an uncharacterized protein from Haemophilus influenzae (strain ATCC 51907 / DSM 11121 / KW20 / Rd).